The following is a 391-amino-acid chain: Choline/ethanolaminephosphotransferase 1 (391 aa).

Over 1–49 (MGYFVPDSHIENLKSYKYQSEDRSLVSKYFLKPFWQRFCHIFPTWMAPN) the chain is Lumenal. Residues 50–69 (IITLSGFAFIVINVLTVFYY) traverse the membrane as a helical segment. The Cytoplasmic segment spans residues 70-172 (DPNLNTDTPR…YHTHTLYLSE (103 aa)). The chain crosses the membrane as a helical span at residues 173–193 (FSGPVEGILIVCVSLILTGIY). Over 194–211 (GKQVIWHTYLFTITVGDK) the chain is Lumenal. The chain crosses the membrane as a helical span at residues 212-232 (VIDVDTLDIVFSLAVFGLVMN). The Cytoplasmic portion of the chain corresponds to 233–264 (ALSAKRNVDKYYRNSTSSANNITQIEQDSAIK). The chain crosses the membrane as a helical span at residues 265-282 (GLLPFFAYYASIALLVWM). Over 283-285 (QPS) the chain is Lumenal. Residues 286–308 (FITLSFILSVGFTGAFTVGRIIV) form a helical membrane-spanning segment. Residues 309-321 (CHLTKQSFPMFNA) are Cytoplasmic-facing. Residues 322–342 (PMLIPLCQIVLYKICLSLWGI) traverse the membrane as a helical segment. Topologically, residues 343–346 (ESNK) are lumenal. Residues 347-367 (IVFALSWLGFGLSLGVHIMFM) form a helical membrane-spanning segment. Residues 368 to 391 (NDIIHEFTEYLDVYALSIKRSKLT) are Cytoplasmic-facing.

It belongs to the CDP-alcohol phosphatidyltransferase class-I family. The cofactor is Mg(2+).

It is found in the golgi apparatus membrane. The enzyme catalyses CDP-ethanolamine + a 1,2-diacyl-sn-glycerol = a 1,2-diacyl-sn-glycero-3-phosphoethanolamine + CMP + H(+). It carries out the reaction CDP-choline + a 1,2-diacyl-sn-glycerol = a 1,2-diacyl-sn-glycero-3-phosphocholine + CMP + H(+). The catalysed reaction is CDP-N-methylethanolamine + a 1,2-diacyl-sn-glycerol = a 1,2-diacyl-sn-glycero-3-phospho-N-methylethanolamine + CMP + H(+). It catalyses the reaction CDP-N,N-dimethylethanolamine + a 1,2-diacyl-sn-glycerol = a 1,2-diacyl-sn-glycero-3-phospho-N,N-dimethylethanolamine + CMP + H(+). The enzyme catalyses 1,2-di-(9Z-octadecenoyl)-glycerol + CDP-choline = 1,2-di-(9Z-octadecenoyl)-sn-glycero-3-phosphocholine + CMP + H(+). It carries out the reaction 1,2-di-(9Z-octadecenoyl)-glycerol + CDP-ethanolamine = 1,2-di-(9Z-octadecenoyl)-sn-glycero-3-phosphoethanolamine + CMP + H(+). Its pathway is phospholipid metabolism; phosphatidylethanolamine biosynthesis; phosphatidylethanolamine from ethanolamine: step 3/3. It functions in the pathway phospholipid metabolism; phosphatidylcholine biosynthesis; phosphatidylcholine from phosphocholine: step 2/2. Its activity is regulated as follows. Requires a divalent cation activator, and is inhibited by CMP. Activated by phospholipids, especially phosphatidylcholine. Catalyzes the final step in the CDP-ethanolamine route leading to phosphatidylethanolamine (PE). Can also catalyze the formation of phosphatidylcholine (PC) from CDP-choline, but does not substantially contribute to PC biosynthesis. Preferentially uses CDP-dimethylethanolamine and CDP-propanolamine as aminoalcohol substrates. Shows highest activity toward di-unsaturated diacylglycerol species as lipid substrates. The CDP-ethanolamine pathway may play a role in maintaining the proper PE species distribution. This Saccharomyces cerevisiae (strain ATCC 204508 / S288c) (Baker's yeast) protein is Choline/ethanolaminephosphotransferase 1 (EPT1).